Reading from the N-terminus, the 310-residue chain is Fe-S cluster assembly protein dre2 (310 aa).

2 disordered regions span residues 1 to 30 (MAPS…GKRT) and 165 to 184 (APAP…DDND). The segment at 24–154 (ADSGKRTLLL…KMDVGNGAAV (131 aa)) is N-terminal SAM-like domain. Residues 155-202 (PLRLGRKKKAAPAPAPVVQPPPIISSDDNDLNDDELIDEDTLLSADDL) are linker. A compositionally biased stretch (pro residues) spans 167–177 (APAPVVQPPPI). [2Fe-2S] cluster contacts are provided by cysteine 212, cysteine 223, cysteine 226, and cysteine 228. Positions 212–228 (CQPKAGKRRRACKDCTC) are fe-S binding site A. Residues cysteine 273, cysteine 276, cysteine 284, and cysteine 287 each coordinate [4Fe-4S] cluster. Short sequence motifs (cx2C motif) lie at residues 273–276 (CGNC) and 284–287 (CDGC). The interval 273-287 (CGNCALGDAFRCDGC) is fe-S binding site B.

Belongs to the anamorsin family. As to quaternary structure, monomer. Interacts with tah18. Interacts with mia40. It depends on [2Fe-2S] cluster as a cofactor. [4Fe-4S] cluster serves as cofactor.

It localises to the cytoplasm. The protein resides in the mitochondrion intermembrane space. Its function is as follows. Component of the cytosolic iron-sulfur (Fe-S) protein assembly (CIA) machinery required for the maturation of extramitochondrial Fe-S proteins. Part of an electron transfer chain functioning in an early step of cytosolic Fe-S biogenesis, facilitating the de novo assembly of a [4Fe-4S] cluster on the scaffold complex cfd1-nbp35. Electrons are transferred to dre2 from NADPH via the FAD- and FMN-containing protein tah18. Tah18-dre2 are also required for the assembly of the diferric tyrosyl radical cofactor of ribonucleotide reductase (RNR), probably by providing electrons for reduction during radical cofactor maturation in the catalytic small subunit rnr2. In Emericella nidulans (strain FGSC A4 / ATCC 38163 / CBS 112.46 / NRRL 194 / M139) (Aspergillus nidulans), this protein is Fe-S cluster assembly protein dre2.